The primary structure comprises 254 residues: MKMKVLVFFVATILVAWQCHAYDMFPLRMNTGYGARTPEVKCASWRLAVEAHNIFGFETIPEECVEATKEYIHGEQYRSDSKTVNQQAYFYARDLEVHPKDTFVFSIDGTVLSNIPYYKKHGYGVEKFNSTLYDEWVNKGNAPALPETLKNYNKLVSLGFKIIFLSGRTLDKQAVTEANLKKAGYHTWEKLILKDPQDPSTPNAVSYKTAAREKLIRQGYNIVGIIGDQWSDLLGGHRGESRTFKLPNPLYYIQ.

The signal sequence occupies residues 1-21 (MKMKVLVFFVATILVAWQCHA). The propeptide occupies 22–34 (YDMFPLRMNTGYG). The N-linked (GlcNAc...) asparagine glycan is linked to N129.

This sequence belongs to the APS1/VSP family. In terms of tissue distribution, accumulates in the stems of developing soybean seedlings.

Functionally, may function as somatic storage protein during early seedling development. In Glycine max (Soybean), this protein is Stem 28 kDa glycoprotein (VSPA).